Consider the following 265-residue polypeptide: Ubiquinone biosynthesis protein COQ4 homolog, mitochondrial (265 aa).

The N-terminal 30 residues, 1–30, are a transit peptide targeting the mitochondrion; the sequence is MMQRSWQSWRRGLTLGLASRRSYVASVEAP. Zn(2+) is bound by residues His-170, Asp-171, His-174, and Glu-186.

The protein belongs to the COQ4 family. Component of a multi-subunit COQ enzyme complex. The cofactor is Zn(2+).

It is found in the mitochondrion inner membrane. The catalysed reaction is a 4-hydroxy-3-methoxy-5-(all-trans-polyprenyl)benzoate + H(+) = a 2-methoxy-6-(all-trans-polyprenyl)phenol + CO2. It participates in cofactor biosynthesis; ubiquinone biosynthesis. Lyase that catalyzes the C1-decarboxylation of 4-hydroxy-3-methoxy-5-(all-trans-polyprenyl)benzoic acid into 2-methoxy-6-(all-trans-polyprenyl)phenol during ubiquinone biosynthesis. The chain is Ubiquinone biosynthesis protein COQ4 homolog, mitochondrial from Drosophila virilis (Fruit fly).